The sequence spans 235 residues: 1-(5-phosphoribosyl)-5-[(5-phosphoribosylamino)methylideneamino] imidazole-4-carboxamide isomerase (235 aa).

The active-site Proton acceptor is the aspartate 8. The Proton donor role is filled by aspartate 127.

This sequence belongs to the HisA/HisF family.

Its subcellular location is the cytoplasm. It catalyses the reaction 1-(5-phospho-beta-D-ribosyl)-5-[(5-phospho-beta-D-ribosylamino)methylideneamino]imidazole-4-carboxamide = 5-[(5-phospho-1-deoxy-D-ribulos-1-ylimino)methylamino]-1-(5-phospho-beta-D-ribosyl)imidazole-4-carboxamide. Its pathway is amino-acid biosynthesis; L-histidine biosynthesis; L-histidine from 5-phospho-alpha-D-ribose 1-diphosphate: step 4/9. This is 1-(5-phosphoribosyl)-5-[(5-phosphoribosylamino)methylideneamino] imidazole-4-carboxamide isomerase from Aliarcobacter butzleri (strain RM4018) (Arcobacter butzleri).